The following is a 69-amino-acid chain: DNA-directed RNA polymerase subunit omega (69 aa).

The protein belongs to the RNA polymerase subunit omega family. As to quaternary structure, the RNAP catalytic core consists of 2 alpha, 1 beta, 1 beta' and 1 omega subunit. When a sigma factor is associated with the core the holoenzyme is formed, which can initiate transcription.

It catalyses the reaction RNA(n) + a ribonucleoside 5'-triphosphate = RNA(n+1) + diphosphate. In terms of biological role, promotes RNA polymerase assembly. Latches the N- and C-terminal regions of the beta' subunit thereby facilitating its interaction with the beta and alpha subunits. This chain is DNA-directed RNA polymerase subunit omega, found in Geotalea uraniireducens (strain Rf4) (Geobacter uraniireducens).